We begin with the raw amino-acid sequence, 483 residues long: Ribulose bisphosphate carboxylase large chain (483 aa).

The propeptide occupies 1-2; that stretch reads MS. 2 residues coordinate substrate: Asn-123 and Thr-173. The Proton acceptor role is filled by Lys-175. Lys-177 contributes to the substrate binding site. Residues Lys-201, Asp-203, and Glu-204 each contribute to the Mg(2+) site. An N6-carboxylysine modification is found at Lys-201. The residue at position 208 (Ser-208) is a Phosphoserine. His-294 serves as the catalytic Proton acceptor. Substrate-binding residues include Arg-295 and His-327. Thr-330 bears the Phosphothreonine mark. Ser-379 lines the substrate pocket.

This sequence belongs to the RuBisCO large chain family. Type I subfamily. Heterohexadecamer of 8 large chains and 8 small chains; disulfide-linked. The disulfide link is formed within the large subunit homodimers. Requires Mg(2+) as cofactor. In terms of processing, the disulfide bond which can form in the large chain dimeric partners within the hexadecamer appears to be associated with oxidative stress and protein turnover.

It localises to the plastid. Its subcellular location is the chloroplast. It carries out the reaction 2 (2R)-3-phosphoglycerate + 2 H(+) = D-ribulose 1,5-bisphosphate + CO2 + H2O. The catalysed reaction is D-ribulose 1,5-bisphosphate + O2 = 2-phosphoglycolate + (2R)-3-phosphoglycerate + 2 H(+). Functionally, ruBisCO catalyzes two reactions: the carboxylation of D-ribulose 1,5-bisphosphate, the primary event in carbon dioxide fixation, as well as the oxidative fragmentation of the pentose substrate in the photorespiration process. Both reactions occur simultaneously and in competition at the same active site. This is Ribulose bisphosphate carboxylase large chain from Aethionema cordifolium (Lebanon stonecress).